We begin with the raw amino-acid sequence, 107 residues long: Putative pterin-4-alpha-carbinolamine dehydratase (107 aa).

It belongs to the pterin-4-alpha-carbinolamine dehydratase family.

It catalyses the reaction (4aS,6R)-4a-hydroxy-L-erythro-5,6,7,8-tetrahydrobiopterin = (6R)-L-erythro-6,7-dihydrobiopterin + H2O. This Rubrobacter xylanophilus (strain DSM 9941 / JCM 11954 / NBRC 16129 / PRD-1) protein is Putative pterin-4-alpha-carbinolamine dehydratase.